The chain runs to 131 residues: MSMSDPIADMLTRIRNAQSTNKVSVSMPSSKLKRAIAAVLKDEGYIDDFSVQDVDGKPQLNISLKYYAGRPVIEKIERVSRPGLRIYRGNQEIPVVMHGLGVTIVSTSKGVMTDRKARDAGVGGEVLCVVA.

It belongs to the universal ribosomal protein uS8 family. In terms of assembly, part of the 30S ribosomal subunit. Contacts proteins S5 and S12.

In terms of biological role, one of the primary rRNA binding proteins, it binds directly to 16S rRNA central domain where it helps coordinate assembly of the platform of the 30S subunit. In Methylobacillus flagellatus (strain ATCC 51484 / DSM 6875 / VKM B-1610 / KT), this protein is Small ribosomal subunit protein uS8.